The chain runs to 391 residues: Ferrochelatase (391 aa).

Fe cation is bound by residues H196 and E281.

It belongs to the ferrochelatase family.

It localises to the cytoplasm. It carries out the reaction heme b + 2 H(+) = protoporphyrin IX + Fe(2+). It participates in porphyrin-containing compound metabolism; protoheme biosynthesis; protoheme from protoporphyrin-IX: step 1/1. In terms of biological role, catalyzes the ferrous insertion into protoporphyrin IX. The chain is Ferrochelatase from Prochlorococcus marinus (strain NATL1A).